Consider the following 785-residue polypeptide: uncharacterized protein (785 aa).

Over residues 53–65 (KNTLTGSHGSNDL) the composition is skewed to polar residues. The tract at residues 53 to 162 (KNTLTGSHGS…RKAADEQGPI (110 aa)) is disordered. Residues 66–79 (ATDESLDSPEDEEA) are compositionally biased toward acidic residues. Residues 81–94 (SPLQLGTPTSTTSG) show a composition bias toward polar residues. The residue at position 215 (Ser-215) is a Phosphoserine. 2 disordered regions span residues 571–590 (KVVD…TSVN) and 631–657 (DSSG…RIQF). The segment covering 575–584 (SDDEESDSDE) has biased composition (acidic residues). Ser-667 carries the phosphoserine modification. Residues 693–785 (DPKMKFTSHP…FGSIFKKVFG (93 aa)) are disordered. Basic residues predominate over residues 725 to 739 (RKAHHHHHHHNHVSR). Residues 776–785 (FGSIFKKVFG) show a composition bias toward low complexity.

This is an uncharacterized protein from Saccharomyces cerevisiae (strain ATCC 204508 / S288c) (Baker's yeast).